We begin with the raw amino-acid sequence, 180 residues long: Centromere protein M (180 aa).

Its subcellular location is the nucleus. The protein localises to the chromosome. It is found in the centromere. In terms of biological role, probable component of a centromeric complex involved in assembly of kinetochore proteins, mitotic progression and chromosome segregation. This chain is Centromere protein M (cenpm), found in Xenopus laevis (African clawed frog).